Reading from the N-terminus, the 593-residue chain is Inactive metallocarboxypeptidase ECM14 (593 aa).

Positions 1–22 (MHFSVRLSLLLTLASSLPLVSA) are cleaved as a signal peptide. The propeptide occupies 23-184 (IPQHEDQAYT…QTIYESYPKT (162 aa)). The disordered stretch occupies residues 180–210 (SYPKTNPSSPSQQGPTTRRFSPSASTSKTKP). Over residues 182–210 (PKTNPSSPSQQGPTTRRFSPSASTSKTKP) the composition is skewed to polar residues. One can recognise a Peptidase M14 domain in the interval 220–546 (DYQPLSVLLP…RAMVAMGKFL (327 aa)). Positions 285 and 288 each coordinate Zn(2+). Residues 285–288 (HARE), arginine 343, and 360–361 (DH) contribute to the substrate site. Cysteine 354 and cysteine 377 are oxidised to a cystine. N-linked (GlcNAc...) asparagine glycosylation occurs at asparagine 370. Residue histidine 417 participates in Zn(2+) binding. 418–419 (SY) lines the substrate pocket. The segment at 557 to 593 (NGPHAAEETQNYDDDFEEDEAEEDSDVFRAQGDDMSS) is disordered. Positions 566–581 (QNYDDDFEEDEAEEDS) are enriched in acidic residues.

The protein belongs to the peptidase M14 family. Zn(2+) is required as a cofactor.

It localises to the vacuole. The protein resides in the secreted. Functionally, inactive carboxypeptidase that may play a role in cell wall organization and biogenesis. The chain is Inactive metallocarboxypeptidase ECM14 (ECM14) from Arthroderma gypseum (strain ATCC MYA-4604 / CBS 118893) (Microsporum gypseum).